The chain runs to 770 residues: POU domain, class 2, transcription factor 1 (770 aa).

Over residues 1 to 26 the composition is skewed to polar residues; the sequence is MNNPSETNKSSMESEDASTGTQTNGL. Disordered stretches follow at residues 1–33, 68–97, 262–285, and 357–385; these read MNNPSETNKSSMESEDASTGTQTNGLDFQKQPV, LNVQSKSSEESGDSQQSSQPSSQPPSVQSA, VQTLPQSQSTPKRIDTPSLEEPSD, and LSSDSTASSPSALNSPGLGAEGLNRRRKK. Residues 80-97 show a composition bias toward low complexity; that stretch reads DSQQSSQPSSQPPSVQSA. The segment covering 262-272 has biased composition (polar residues); that stretch reads VQTLPQSQSTP. Thr-271 and Thr-277 each carry phosphothreonine. The POU-specific domain maps to 281-355; sequence EEPSDLEELE…LLEKWLNDAE (75 aa). Ser-284 bears the Phosphoserine mark. A compositionally biased stretch (low complexity) spans 357–372; the sequence is LSSDSTASSPSALNSP. The segment at residues 382–441 is a DNA-binding region (homeobox); the sequence is RRKKRTSIETNIRVALEKSFMENQKPTSEDITLIAEQLNMEKEVIRVWFCNRRQKEKRIN. Phosphoserine is present on residues Ser-388 and Ser-451. Positions 519–580 are enriched in low complexity; the sequence is TTTAGTTDST…TNTTQTTSTP (62 aa). Residues 519-589 form a disordered region; the sequence is TTTAGTTDST…PLPSPLGASQ (71 aa).

This sequence belongs to the POU transcription factor family. Class-2 subfamily. As to quaternary structure, interacts with POU2AF1; the interaction increases POU2F1 transactivation activity. Interacts with NR3C1, AR, PGR and HCFC1. Post-translationally, phosphorylated by PRKDC. As to expression, ubiquitously expressed. However, isoforms 4 and 5 are only expressed in lymphocytes.

The protein resides in the nucleus. In terms of biological role, transcription factor that binds to the octamer motif (5'-ATTTGCAT-3') and activates the promoters of the genes for some small nuclear RNAs (snRNA) and of genes such as those for histone H2B and immunoglobulins. Modulates transcription transactivation by NR3C1, AR and PGR. The sequence is that of POU domain, class 2, transcription factor 1 (Pou2f1) from Mus musculus (Mouse).